We begin with the raw amino-acid sequence, 224 residues long: Peroxiredoxin-6 (224 aa).

One can recognise a Thioredoxin domain in the interval 5–169 (LLLGDVAPNF…ILRVVISLQL (165 aa)). The interval 31–40 (DSWGILFSHP) is required and sufficient for targeting to lysosomes and lamellar bodies. Thr44 carries the post-translational modification Phosphothreonine. Catalysis depends on Cys47, which acts as the Cysteine sulfenic acid (-SOH) intermediate; for peroxidase activity. At Lys63 the chain carries N6-acetyllysine. Residue Tyr89 is modified to Phosphotyrosine. Asp140 acts as the For phospholipase activity in catalysis. The residue at position 177 (Thr177) is a Phosphothreonine; by MAPK. Lys209 carries the N6-acetyllysine; alternate modification. An N6-succinyllysine; alternate modification is found at Lys209.

The protein belongs to the peroxiredoxin family. Prx6 subfamily. As to quaternary structure, homodimer. Interacts with GSTP1; mediates PRDX6 glutathionylation and regeneration. Interacts with APEX1. Interacts with STH. May interact with FAM168B. May interact with HTR2A. In terms of processing, irreversibly inactivated by overoxidation of Cys-47 to sulfinic acid (Cys-SO(2)H) and sulfonic acid (Cys-SO(3)H) forms upon oxidative stress. Phosphorylation at Thr-177 by MAP kinases increases the phospholipase activity of the enzyme. The phosphorylated form exhibits a greater lysophosphatidylcholine acyltransferase activity compared to the non-phosphorylated form.

Its subcellular location is the cytoplasm. The protein resides in the lysosome. It carries out the reaction a hydroperoxide + 2 glutathione = an alcohol + glutathione disulfide + H2O. The catalysed reaction is a 1,2-diacyl-sn-glycero-3-phosphocholine + H2O = a 1-acyl-sn-glycero-3-phosphocholine + a fatty acid + H(+). The enzyme catalyses a 1-acyl-sn-glycero-3-phosphocholine + an acyl-CoA = a 1,2-diacyl-sn-glycero-3-phosphocholine + CoA. It catalyses the reaction 1-hexadecanoyl-sn-glycero-3-phosphocholine + hexadecanoyl-CoA = 1,2-dihexadecanoyl-sn-glycero-3-phosphocholine + CoA. It carries out the reaction 1,2-dihexadecanoyl-sn-glycero-3-phosphocholine + H2O = 1-hexadecanoyl-sn-glycero-3-phosphocholine + hexadecanoate + H(+). With respect to regulation, MJ33 or lithium;[(2R)-1-hexadecoxy-3-(2,2,2-trifluoroethoxy)propan-2-yl] methyl phosphate inhibits its phospholipase A2 activity. CI-976 or 2,2-Dimethyl-N-(2,4,6-trimethoxyphenyl)dodecanamide inhibits its lysophosphatidylcholine acyltransferase activity. Thiol-specific peroxidase that catalyzes the reduction of hydrogen peroxide and organic hydroperoxides to water and alcohols, respectively. Can reduce H(2)O(2) and short chain organic, fatty acid, and phospholipid hydroperoxides. Also has phospholipase activity, can therefore either reduce the oxidized sn-2 fatty acyl group of phospholipids (peroxidase activity) or hydrolyze the sn-2 ester bond of phospholipids (phospholipase activity). These activities are dependent on binding to phospholipids at acidic pH and to oxidized phospholipds at cytosolic pH. Plays a role in cell protection against oxidative stress by detoxifying peroxides and in phospholipid homeostasis. Exhibits acyl-CoA-dependent lysophospholipid acyltransferase which mediates the conversion of lysophosphatidylcholine (1-acyl-sn-glycero-3-phosphocholine or LPC) into phosphatidylcholine (1,2-diacyl-sn-glycero-3-phosphocholine or PC). Shows a clear preference for LPC as the lysophospholipid and for palmitoyl CoA as the fatty acyl substrate. The chain is Peroxiredoxin-6 (PRDX6) from Homo sapiens (Human).